We begin with the raw amino-acid sequence, 434 residues long: D-amino acid dehydrogenase (434 aa).

3-17 (VIVLGSGVIGTTTAY) is an FAD binding site.

It belongs to the DadA oxidoreductase family. FAD serves as cofactor.

The catalysed reaction is a D-alpha-amino acid + A + H2O = a 2-oxocarboxylate + AH2 + NH4(+). It participates in amino-acid degradation; D-alanine degradation; NH(3) and pyruvate from D-alanine: step 1/1. Oxidative deamination of D-amino acids. The chain is D-amino acid dehydrogenase from Bordetella petrii (strain ATCC BAA-461 / DSM 12804 / CCUG 43448).